The primary structure comprises 320 residues: ATP-dependent 6-phosphofructokinase (320 aa).

G12 is an ATP binding site. 22–26 (RGVVR) is a binding site for ADP. Residues 73–74 (RF) and 103–106 (GDGS) each bind ATP. A Mg(2+)-binding site is contributed by D104. 126 to 128 (TID) serves as a coordination point for substrate. D128 acts as the Proton acceptor in catalysis. R155 lines the ADP pocket. Substrate is bound by residues R163 and 170-172 (MGR). Residues 186 to 188 (GCE), K212, and 214 to 216 (KKH) contribute to the ADP site. Residues E223, R244, and 250–253 (HIQR) contribute to the substrate site.

Belongs to the phosphofructokinase type A (PFKA) family. ATP-dependent PFK group I subfamily. Prokaryotic clade 'B1' sub-subfamily. As to quaternary structure, homotetramer. Requires Mg(2+) as cofactor.

It localises to the cytoplasm. The catalysed reaction is beta-D-fructose 6-phosphate + ATP = beta-D-fructose 1,6-bisphosphate + ADP + H(+). It participates in carbohydrate degradation; glycolysis; D-glyceraldehyde 3-phosphate and glycerone phosphate from D-glucose: step 3/4. With respect to regulation, allosterically activated by ADP and other diphosphonucleosides, and allosterically inhibited by phosphoenolpyruvate. Catalyzes the phosphorylation of D-fructose 6-phosphate to fructose 1,6-bisphosphate by ATP, the first committing step of glycolysis. In Vibrio parahaemolyticus serotype O3:K6 (strain RIMD 2210633), this protein is ATP-dependent 6-phosphofructokinase.